The following is a 365-amino-acid chain: Putative outer membrane porin protein NmpC (365 aa).

Positions 1–23 (MKKLTVAISAVAASVLMAMSAQA) are cleaved as a signal peptide.

This sequence belongs to the Gram-negative porin family. In terms of assembly, homotrimer.

The protein resides in the cell outer membrane. In Escherichia coli (strain K12), this protein is Putative outer membrane porin protein NmpC (nmpC).